We begin with the raw amino-acid sequence, 191 residues long: Thioredoxin F-type, chloroplastic (191 aa).

The 123-residue stretch at 68–190 folds into the Thioredoxin domain; it reads KASLETAVGA…LVAAIEAARS (123 aa). Residues Cys115 and Cys118 each act as nucleophile in the active site. Residues Cys115 and Cys118 are joined by a disulfide bond.

The protein belongs to the thioredoxin family. Plant F-type subfamily. In terms of assembly, forms a complex with heterodimeric ferredoxin-thioredoxin reductase (FTR) and ferredoxin.

The protein resides in the plastid. The protein localises to the chloroplast. Its function is as follows. Participates in various redox reactions through the reversible oxidation of the active center dithiol to a disulfide. The F form is known to activate a number of enzymes of the photosynthetic carbon cycle. The polypeptide is Thioredoxin F-type, chloroplastic (Mesembryanthemum crystallinum (Common ice plant)).